A 285-amino-acid chain; its full sequence is tRNA (cytidine(32)/guanosine(34)-2'-O)-methyltransferase (285 aa).

Residues glycine 53, tryptophan 55, aspartate 83, aspartate 99, and aspartate 124 each contribute to the S-adenosyl-L-methionine site. The active-site Proton acceptor is the lysine 164.

Belongs to the class I-like SAM-binding methyltransferase superfamily. RNA methyltransferase RlmE family. TRM7 subfamily.

Its subcellular location is the cytoplasm. The enzyme catalyses cytidine(32)/guanosine(34) in tRNA + 2 S-adenosyl-L-methionine = 2'-O-methylcytidine(32)/2'-O-methylguanosine(34) in tRNA + 2 S-adenosyl-L-homocysteine + 2 H(+). In terms of biological role, methylates the 2'-O-ribose of nucleotides at positions 32 and 34 of the tRNA anticodon loop of substrate tRNAs. Requires trm732 for methylation of the cytidine at position 32 of the anticodon loop of substrate tRNAs. Requires trm734 for methylation of the nucleotide at position 34 of the anticodon loop of substrate tRNAs. Methylates tRNA(Phe). The chain is tRNA (cytidine(32)/guanosine(34)-2'-O)-methyltransferase from Schizosaccharomyces pombe (strain 972 / ATCC 24843) (Fission yeast).